The following is a 185-amino-acid chain: Pyruvate/ketoisovalerate oxidoreductases common subunit gamma (185 aa).

As to quaternary structure, heterotetramer of one alpha, one beta, one delta and one gamma chain.

It catalyses the reaction 2 oxidized [2Fe-2S]-[ferredoxin] + pyruvate + CoA = 2 reduced [2Fe-2S]-[ferredoxin] + acetyl-CoA + CO2 + H(+). The catalysed reaction is 3-methyl-2-oxobutanoate + 2 oxidized [2Fe-2S]-[ferredoxin] + CoA = 2-methylpropanoyl-CoA + 2 reduced [2Fe-2S]-[ferredoxin] + CO2 + H(+). This Pyrococcus furiosus (strain ATCC 43587 / DSM 3638 / JCM 8422 / Vc1) protein is Pyruvate/ketoisovalerate oxidoreductases common subunit gamma (porG).